The sequence spans 430 residues: 3-phosphoshikimate 1-carboxyvinyltransferase (430 aa).

3 residues coordinate 3-phosphoshikimate: lysine 23, serine 24, and arginine 28. Lysine 23 serves as a coordination point for phosphoenolpyruvate. Positions 95 and 123 each coordinate phosphoenolpyruvate. The 3-phosphoshikimate site is built by serine 169, glutamine 171, aspartate 315, and lysine 342. Position 171 (glutamine 171) interacts with phosphoenolpyruvate. The active-site Proton acceptor is the aspartate 315. Phosphoenolpyruvate is bound by residues arginine 346 and arginine 388.

This sequence belongs to the EPSP synthase family. In terms of assembly, monomer.

The protein resides in the cytoplasm. The enzyme catalyses 3-phosphoshikimate + phosphoenolpyruvate = 5-O-(1-carboxyvinyl)-3-phosphoshikimate + phosphate. Its pathway is metabolic intermediate biosynthesis; chorismate biosynthesis; chorismate from D-erythrose 4-phosphate and phosphoenolpyruvate: step 6/7. Functionally, catalyzes the transfer of the enolpyruvyl moiety of phosphoenolpyruvate (PEP) to the 5-hydroxyl of shikimate-3-phosphate (S3P) to produce enolpyruvyl shikimate-3-phosphate and inorganic phosphate. The polypeptide is 3-phosphoshikimate 1-carboxyvinyltransferase (Streptococcus pyogenes serotype M2 (strain MGAS10270)).